The chain runs to 442 residues: Exodeoxyribonuclease 7 large subunit (442 aa).

Belongs to the XseA family. As to quaternary structure, heterooligomer composed of large and small subunits.

It is found in the cytoplasm. The enzyme catalyses Exonucleolytic cleavage in either 5'- to 3'- or 3'- to 5'-direction to yield nucleoside 5'-phosphates.. Functionally, bidirectionally degrades single-stranded DNA into large acid-insoluble oligonucleotides, which are then degraded further into small acid-soluble oligonucleotides. This chain is Exodeoxyribonuclease 7 large subunit, found in Shewanella sediminis (strain HAW-EB3).